Here is a 949-residue protein sequence, read N- to C-terminus: Translation initiation factor IF-2 (949 aa).

Disordered stretches follow at residues 61–122 (IQAN…PIIK), 139–159 (VENT…QKLQ), and 171–284 (LTQS…NKSH). 2 stretches are compositionally biased toward basic and acidic residues: residues 112 to 122 (KKKEAPAPIIK) and 150 to 159 (QIEKAKQKLQ). The segment covering 174–190 (SNTNTTNNANSASNVSN) has biased composition (low complexity). Positions 191 to 208 (AKKEISEVKKQEQEIKRH) are enriched in basic and acidic residues. Basic residues predominate over residues 209 to 220 (ENIKRRTGFRVI). Positions 249-264 (EDIKKEWQEKDKQETK) are enriched in basic and acidic residues. In terms of domain architecture, tr-type G spans 448–617 (ERPPVVTIMG…LIQADIMELK (170 aa)). Residues 457-464 (GHVDHGKT) form a G1 region. Residue 457 to 464 (GHVDHGKT) coordinates GTP. The segment at 482 to 486 (GITQH) is G2. The interval 503–506 (DTPG) is G3. GTP is bound by residues 503–507 (DTPGH) and 557–560 (NKMD). The tract at residues 557 to 560 (NKMD) is G4. The G5 stretch occupies residues 593–595 (SAK).

Belongs to the TRAFAC class translation factor GTPase superfamily. Classic translation factor GTPase family. IF-2 subfamily.

The protein localises to the cytoplasm. In terms of biological role, one of the essential components for the initiation of protein synthesis. Protects formylmethionyl-tRNA from spontaneous hydrolysis and promotes its binding to the 30S ribosomal subunits. Also involved in the hydrolysis of GTP during the formation of the 70S ribosomal complex. This is Translation initiation factor IF-2 (infB) from Helicobacter pylori (strain J99 / ATCC 700824) (Campylobacter pylori J99).